The primary structure comprises 448 residues: Fumarate hydratase class II (448 aa).

Residues 83 to 85 (SGT), 113 to 116 (HPND), 123 to 125 (SSN), and threonine 171 each bind substrate. The active-site Proton donor/acceptor is the histidine 172. Serine 302 is an active-site residue. Residues serine 303 and 308-310 (KVN) contribute to the substrate site.

This sequence belongs to the class-II fumarase/aspartase family. Fumarase subfamily. As to quaternary structure, homotetramer.

The protein resides in the cytoplasm. It catalyses the reaction (S)-malate = fumarate + H2O. The protein operates within carbohydrate metabolism; tricarboxylic acid cycle; (S)-malate from fumarate: step 1/1. In terms of biological role, involved in the TCA cycle. Catalyzes the stereospecific interconversion of fumarate to L-malate. This is Fumarate hydratase class II from Blochmanniella floridana.